Consider the following 638-residue polypeptide: Pentatricopeptide repeat-containing protein At1g59720, chloroplastic/mitochondrial (638 aa).

Residues 1 to 40 constitute a chloroplast and mitochondrion transit peptide; sequence MVVRSIIVSPPTTITYYHPMSIGLLVHPLSPHIPPASSPS. PPR repeat units follow at residues 82 to 112, 113 to 148, 150 to 184, 185 to 215, 216 to 246, 250 to 280, 288 to 318, 319 to 353, 356 to 390, and 392 to 422; these read TLFLYGKILQLSSSFSDVNYAFRVFDSIENH, SSFMWNTLIRACAHDVSRKEEAFMLYRKMLERGESS, DKHTFPFVLKACAYIFGFSEGKQVHCQIVKHGFGG, DVYVNNGLIHLYGSCGCLDLARKVFDEMPER, SLVSWNSMIDALVRFGEYDSALQLFREMQRS, DGYTMQSVLSACAGLGSLSLGTWAHAFLLRK, DVLVKNSLIEMYCKCGSLRMAEQVFQGMQKR, DLASWNAMILGFATHGRAEEAMNFFDRMVDKRENV, NSVTFVGLLIACNHRGFVNKGRQYFDMMVRDYCIE, and ALEHYGCIVDLIARAGYITEAIDMVMSMPMK. The interval 427-510 is type E motif; that stretch reads IWRSLLDACC…EPGCSSIEIN (84 aa). Residues 511 to 541 form a type E(+) motif region; it reads GISHEFFAGDTSHPQTKQIYQQLKVIDDRLR. The segment at 542-638 is type DYW motif; the sequence is SIGYLPDRSQ…DGSCSCLDYW (97 aa).

This sequence belongs to the PPR family. PCMP-H subfamily. In terms of assembly, interacts with ORRM1. Interacts with VAR3/OZ1.

Its subcellular location is the plastid. The protein localises to the chloroplast. It is found in the mitochondrion. Functionally, involved in multiple sites RNA editing events in chloroplasts. Involved in the editing of the site 2 of ndhB (ndhB-2) and site 3 of ndhD (ndhD-3) transcripts, which are two plastid-encoded subunits of the chloroplast NAD(P)H dehydrogenase (NDH) complex. Required for the activity of the NDH complex of the photosynthetic electron transport chain. This is Pentatricopeptide repeat-containing protein At1g59720, chloroplastic/mitochondrial (PCMP-H51) from Arabidopsis thaliana (Mouse-ear cress).